The sequence spans 1034 residues: Putative beta-glucuronidase (1034 aa).

Glu432 acts as the Proton donor in catalysis. Residues 909–1034 (VDISAEEGVL…GPFIDELFID (126 aa)) enclose the CBM6 domain.

This sequence belongs to the glycosyl hydrolase 2 family.

The protein resides in the cytoplasm. It carries out the reaction a beta-D-glucuronoside + H2O = D-glucuronate + an alcohol. Its function is as follows. Glycoside hydrolase that may be involved in ulvan degradation. Ulvan is the main polysaccharide component of the Ulvales (green seaweed) cell wall. It is composed of disaccharide building blocks comprising 3-sulfated rhamnose (Rha3S) linked to D-glucuronic acid (GlcA), L-iduronic acid (IduA), or D-xylose (Xyl). This is Putative beta-glucuronidase from Formosa agariphila (strain DSM 15362 / KCTC 12365 / LMG 23005 / KMM 3901 / M-2Alg 35-1).